A 624-amino-acid polypeptide reads, in one-letter code: Elongation factor 4 (624 aa).

Residues 17–203 enclose the tr-type G domain; that stretch reads ALIRNFCIIA…RVVRDVPAPV (187 aa). GTP contacts are provided by residues 29-34 and 150-153; these read DHGKST and NKID.

This sequence belongs to the TRAFAC class translation factor GTPase superfamily. Classic translation factor GTPase family. LepA subfamily.

Its subcellular location is the cell membrane. It carries out the reaction GTP + H2O = GDP + phosphate + H(+). In terms of biological role, required for accurate and efficient protein synthesis under certain stress conditions. May act as a fidelity factor of the translation reaction, by catalyzing a one-codon backward translocation of tRNAs on improperly translocated ribosomes. Back-translocation proceeds from a post-translocation (POST) complex to a pre-translocation (PRE) complex, thus giving elongation factor G a second chance to translocate the tRNAs correctly. Binds to ribosomes in a GTP-dependent manner. This Streptomyces griseus subsp. griseus (strain JCM 4626 / CBS 651.72 / NBRC 13350 / KCC S-0626 / ISP 5235) protein is Elongation factor 4.